We begin with the raw amino-acid sequence, 719 residues long: Potassium-transporting ATPase ATP-binding subunit (719 aa).

4 helical membrane-spanning segments follow: residues 35–55 (LFVV…PGLF), 62–82 (VYYA…NYAE), 228–248 (ILLS…FFFG), and 254–274 (FVGG…VALM). The active-site 4-aspartylphosphate intermediate is D318. Positions 355 and 359 each coordinate ATP. A disordered region spans residues 372–396 (GKVQTDGGQSASEELDEPGDSVDAP). Residues 373–383 (KVQTDGGQSAS) show a composition bias toward polar residues. Residues 416-423 (FSAETRMS) and K435 each bind ATP. Mg(2+) contacts are provided by D554 and D558. The next 3 helical transmembrane spans lie at 624–644 (FVLL…MDIL), 652–672 (AVTA…PLAL), and 698–718 (LIAP…LGVF).

It belongs to the cation transport ATPase (P-type) (TC 3.A.3) family. Type IA subfamily. The system is composed of three essential subunits: KdpA, KdpB and KdpC. The complex also contains KdpF, a small non-essential subunit.

The protein resides in the cell membrane. The catalysed reaction is K(+)(out) + ATP + H2O = K(+)(in) + ADP + phosphate + H(+). Functionally, part of the high-affinity ATP-driven potassium transport (or Kdp) system, which catalyzes the hydrolysis of ATP coupled with the electrogenic transport of potassium into the cytoplasm. This subunit is responsible for energy coupling to the transport system and for the release of the potassium ions to the cytoplasm. The Kdp system is essential for growth under K(+) limitation, and for survival under desiccation and salt crystal inclusion. This chain is Potassium-transporting ATPase ATP-binding subunit, found in Halobacterium salinarum (strain ATCC 29341 / DSM 671 / R1).